Consider the following 289-residue polypeptide: Glycine--tRNA ligase alpha subunit (289 aa).

It belongs to the class-II aminoacyl-tRNA synthetase family. Tetramer of two alpha and two beta subunits.

It localises to the cytoplasm. It carries out the reaction tRNA(Gly) + glycine + ATP = glycyl-tRNA(Gly) + AMP + diphosphate. The protein is Glycine--tRNA ligase alpha subunit (glyQ) of Rickettsia prowazekii (strain Madrid E).